We begin with the raw amino-acid sequence, 393 residues long: Acetate kinase (393 aa).

N7 lines the Mg(2+) pocket. K14 serves as a coordination point for ATP. R87 provides a ligand contact to substrate. The Proton donor/acceptor role is filled by D144. ATP contacts are provided by residues 202 to 206 (HIGNG), 277 to 279 (DLR), and 326 to 330 (GVGEN). A Mg(2+)-binding site is contributed by E380.

The protein belongs to the acetokinase family. Homodimer. Requires Mg(2+) as cofactor. Mn(2+) is required as a cofactor.

It is found in the cytoplasm. The enzyme catalyses acetate + ATP = acetyl phosphate + ADP. The protein operates within metabolic intermediate biosynthesis; acetyl-CoA biosynthesis; acetyl-CoA from acetate: step 1/2. In terms of biological role, catalyzes the formation of acetyl phosphate from acetate and ATP. Can also catalyze the reverse reaction. This chain is Acetate kinase, found in Mycoplasmopsis pulmonis (strain UAB CTIP) (Mycoplasma pulmonis).